Consider the following 372-residue polypeptide: NAD(P)H-quinone oxidoreductase subunit 1 (372 aa).

Helical transmembrane passes span 28–48 (IWLP…VLVV), 97–117 (WLFT…YLIV), 130–150 (VGIF…LMSG), 176–196 (LALA…IDIV), 204–224 (ILGW…IAAL), 265–285 (LVLS…FPIP), 308–328 (SLGI…AVLL), and 351–371 (VALV…IAFG).

This sequence belongs to the complex I subunit 1 family. NDH-1 is composed of at least 11 different subunits.

It localises to the cellular thylakoid membrane. The catalysed reaction is a plastoquinone + NADH + (n+1) H(+)(in) = a plastoquinol + NAD(+) + n H(+)(out). It catalyses the reaction a plastoquinone + NADPH + (n+1) H(+)(in) = a plastoquinol + NADP(+) + n H(+)(out). Its function is as follows. NDH-1 shuttles electrons from an unknown electron donor, via FMN and iron-sulfur (Fe-S) centers, to quinones in the respiratory and/or the photosynthetic chain. The immediate electron acceptor for the enzyme in this species is believed to be plastoquinone. Couples the redox reaction to proton translocation, and thus conserves the redox energy in a proton gradient. The protein is NAD(P)H-quinone oxidoreductase subunit 1 of Picosynechococcus sp. (strain ATCC 27264 / PCC 7002 / PR-6) (Agmenellum quadruplicatum).